The following is a 1065-amino-acid chain: Presequence protease, mitochondrial (1065 aa).

Residues 1 to 42 (MLRSFSGAGKCKCRIPVSRQPVCGRSLRISSTLTPWNQSRRA) constitute a mitochondrion transit peptide. A Zn(2+)-binding site is contributed by histidine 117. Residue glutamate 120 is the Proton acceptor of the active site. Histidine 121 contributes to the Zn(2+) binding site. Residue glutamate 193 is part of the active site. Zn(2+) is bound at residue glutamate 230.

It belongs to the peptidase M16 family. PreP subfamily. Monomer and homodimer; homodimerization is induced by binding of the substrate. Requires Zn(2+) as cofactor.

It localises to the mitochondrion intermembrane space. Its subcellular location is the mitochondrion matrix. Its function is as follows. Degrades mitochondrial transit peptides after their cleavage in the intermembrane space or in the matrix, and presequence peptides; clearance of these peptides is required to keep the presequence processing machinery running. Preferentially cleaves the N-terminal side of paired basic amino acid residues. Also degrades other unstructured peptides. May function as an ATP-dependent peptidase as opposed to a metalloendopeptidase. This chain is Presequence protease, mitochondrial (cym1), found in Aspergillus fumigatus (strain ATCC MYA-4609 / CBS 101355 / FGSC A1100 / Af293) (Neosartorya fumigata).